A 337-amino-acid polypeptide reads, in one-letter code: Tetraacyldisaccharide 4'-kinase (337 aa).

55-62 (NAGGTGKT) provides a ligand contact to ATP.

Belongs to the LpxK family.

The catalysed reaction is a lipid A disaccharide + ATP = a lipid IVA + ADP + H(+). It participates in glycolipid biosynthesis; lipid IV(A) biosynthesis; lipid IV(A) from (3R)-3-hydroxytetradecanoyl-[acyl-carrier-protein] and UDP-N-acetyl-alpha-D-glucosamine: step 6/6. Transfers the gamma-phosphate of ATP to the 4'-position of a tetraacyldisaccharide 1-phosphate intermediate (termed DS-1-P) to form tetraacyldisaccharide 1,4'-bis-phosphate (lipid IVA). The protein is Tetraacyldisaccharide 4'-kinase of Dinoroseobacter shibae (strain DSM 16493 / NCIMB 14021 / DFL 12).